A 126-amino-acid chain; its full sequence is Profilin-2 (126 aa).

The residue at position 2 (S2) is a Blocked amino end (Ser). The residue at position 104 (K104) is an N6,N6,N6-trimethyllysine.

Belongs to the profilin family. In terms of assembly, occurs in many kinds of cells as a complex with monomeric actin in a 1:1 ratio.

It is found in the cytoplasm. Its subcellular location is the cytoskeleton. In terms of biological role, binds to actin and affects the structure of the cytoskeleton. At high concentrations, profilin prevents the polymerization of actin, whereas it enhances it at low concentrations. By binding to PIP2, it inhibits the formation of IP3 and DG. In Acanthamoeba castellanii (Amoeba), this protein is Profilin-2.